The following is an 81-amino-acid chain: MVCIPCIVIPLLLWVYKRFLEPFLYPIISPIINTFWTKKAVQETAASDQKVSEKSNGTCKPESNGEATANGSTIAADKKTD.

The span at 45 to 58 (AASDQKVSEKSNGT) shows a compositional bias: polar residues. The disordered stretch occupies residues 45 to 81 (AASDQKVSEKSNGTCKPESNGEATANGSTIAADKKTD).

It belongs to the UPF0729 family.

The chain is UPF0729 protein C18orf32 homolog from Anoplopoma fimbria (Sablefish).